The sequence spans 102 residues: Carboxysome shell protein CcmK2 (102 aa).

In terms of domain architecture, BMC spans 4-90 (AVGMIETLGF…PHENLEYVLP (87 aa)).

Belongs to the bacterial microcompartments protein family. CcmK subfamily. Homohexamer. Interacts with CcmO in the carboxysome. Interacts with CcmN.

It is found in the carboxysome. Its function is as follows. One of the shell proteins of the carboxysome, a polyhedral inclusion where RuBisCO (ribulose bisphosphate carboxylase, rbcL-rbcS) is sequestered. Assembles into hexamers which make sheets that form the facets of the polyhedral carboxysome. The hexamer central pore probably regulates metabolite flux. The major shell protein of the carboxysome, a polyhedral inclusion where RuBisCO (ribulose bisphosphate carboxylase, rbcL-rbcS) is sequestered. Hexamers make sheets that form the facets of the polyhedral carboxysome. The shell is 4.5 nm thick, as observed for CcmK hexamers. Required for recruitment of CcmO to the pre-carboxysome. In PCC 7942 there are several CcmK paralogs with presumably functional differences; replacing the central pore residues (34-37) with those of either CcmK4 from this organism (Tyr-Met-Arg-Ala) or from an alpha-type carboxysome forming cyanobacterium (CsoS1 of P.marinus strain MIT 9313, Arg-Glu-Phe-Val) allows the bacterium to make carboxysomes, but the expression level is too low to know if the carboxysome is functional for CO(2) fixation. In terms of biological role, beta-carboxysome assembly initiates when soluble RuBisCO is condensed into a liquid matrix in a pre-carboxysome by the RbcS-like domains of probably both CcmM58 and CcmM35. CcmN interacts with the N-terminus of CcmM58, and then recruits the CcmK2 major shell protein via CcmN's encapsulation peptide. Shell formation requires CcmK proteins and CcmO. CcmL caps the otherwise elongated carboxysome. Once fully encapsulated carboxysomes are formed, they migrate within the cell probably via interactions with the cytoskeleton. This chain is Carboxysome shell protein CcmK2, found in Synechococcus elongatus (strain ATCC 33912 / PCC 7942 / FACHB-805) (Anacystis nidulans R2).